We begin with the raw amino-acid sequence, 409 residues long: Protein PHOSPHATE STARVATION RESPONSE 1 (409 aa).

Positions M1 to T15 are enriched in basic and acidic residues. Disordered regions lie at residues M1–L42, E86–S108, and E178–A226. 2 stretches are compositionally biased toward polar residues: residues R16 to P26 and H90 to S108. Over residues Q192–G224 the composition is skewed to low complexity. The HTH myb-type domain maps to G222–Y282. Positions P253 to R278 form a DNA-binding region, H-T-H motif. The stretch at T314–Q334 forms a coiled coil. Positions L327–E332 match the LHEQLE motif. Residues G358–A370 are compositionally biased toward polar residues. The segment at G358–N409 is disordered. Basic and acidic residues predominate over residues A371–E396. S399 bears the Phosphoserine mark.

Belongs to the MYB-CC family. Homodimers and heterodimers. Interacts with SPX1 in a Pi-dependent manner. Does not interact with PHL2 or PHL3. Sumoylated by SIZ1. Sumoylation controls phosphate deficiency responses.

The protein resides in the nucleus. Functionally, transcription factor involved in phosphate starvation signaling. Binds as a dimer to P1BS, an imperfect palindromic sequence 5'-GNATATNC-3', to promote the expression of inorganic phosphate (Pi) starvation-responsive genes. SPX1 is a competitive inhibitor of this DNA-binding. PHR1 binding to its targets is low Pi-dependent. Regulates the expression of miR399. Regulates the expression of IPS1 (At3g09922), a non-coding RNA that mimics the target of miR399 to block the cleavage of PHO2 under Pi-deficient conditions. Regulates lipid remodeling and triacylglycerol accumulation during phosphorus starvation. Required for the shoot-specific hypoxic response. Regulates FER1 expression upon phosphate starvation, linking iron and phosphate homeostasis. Contributes to the homeostasis of both sulfate and phosphate in plants under phosphate deficiency. Required for adaptation to high light and retaining functional photosynthesis during phosphate starvation. Involved in the coregulation of Zn and Pi homeostasis. The chain is Protein PHOSPHATE STARVATION RESPONSE 1 from Arabidopsis thaliana (Mouse-ear cress).